Reading from the N-terminus, the 57-residue chain is Ribulose bisphosphate carboxylase large chain (57 aa).

Positions 1–2 are excised as a propeptide; it reads MS. An N-acetylproline modification is found at P3. K14 is subject to N6,N6,N6-trimethyllysine.

The protein belongs to the RuBisCO large chain family. Type I subfamily. Heterohexadecamer of 8 large chains and 8 small chains.

The protein resides in the plastid. The protein localises to the chloroplast. The enzyme catalyses 2 (2R)-3-phosphoglycerate + 2 H(+) = D-ribulose 1,5-bisphosphate + CO2 + H2O. It catalyses the reaction D-ribulose 1,5-bisphosphate + O2 = 2-phosphoglycolate + (2R)-3-phosphoglycerate + 2 H(+). Functionally, ruBisCO catalyzes two reactions: the carboxylation of D-ribulose 1,5-bisphosphate, the primary event in carbon dioxide fixation, as well as the oxidative fragmentation of the pentose substrate in the photorespiration process. Both reactions occur simultaneously and in competition at the same active site. This is Ribulose bisphosphate carboxylase large chain (rbcL) from Camellia sinensis (Tea plant).